The primary structure comprises 490 residues: Beta-1,3-glucan-binding protein 1 (490 aa).

Residues 1–19 form the signal peptide; it reads MYKQTVVIFLLCFFICVSC. One can recognise a CBM39 domain in the interval 20 to 119; the sequence is YEVPPAKLEA…GEWTVTGYVD (100 aa). One can recognise a GH16 domain in the interval 152 to 490; it reads PPTSQNTYPC…QVDYVRVYAL (339 aa). An N-linked (GlcNAc...) asparagine glycan is attached at Asn-372.

Belongs to the insect beta-1,3-glucan binding protein family. As to quaternary structure, monomer. Hemolymph.

It is found in the secreted. Its function is as follows. Plays a role in the recognition of invading microorganisms activating the phenoloxidase cascade. Binds specifically to beta-1,3-glucan. Binds the Aspergillus niger cell wall component alpha-1,3-glucan, a fungal pathogen-associated molecular pattern (PAMP) that activates the host immune response. The sequence is that of Beta-1,3-glucan-binding protein 1 from Galleria mellonella (Greater wax moth).